The following is a 279-amino-acid chain: NAD kinase (279 aa).

Asp57 acts as the Proton acceptor in catalysis. Residues 57 to 58 (DG), 133 to 134 (NE), Arg159, Asp161, 172 to 177 (TAYNKS), and Ala196 each bind NAD(+).

This sequence belongs to the NAD kinase family. A divalent metal cation is required as a cofactor.

The protein resides in the cytoplasm. It carries out the reaction NAD(+) + ATP = ADP + NADP(+) + H(+). Involved in the regulation of the intracellular balance of NAD and NADP, and is a key enzyme in the biosynthesis of NADP. Catalyzes specifically the phosphorylation on 2'-hydroxyl of the adenosine moiety of NAD to yield NADP. The sequence is that of NAD kinase from Streptococcus thermophilus (strain CNRZ 1066).